Here is a 711-residue protein sequence, read N- to C-terminus: Taperin (711 aa).

Disordered regions lie at residues 134–305, 328–384, and 414–438; these read SRLL…APKP, RNSF…LGKS, and QRPSSPPPFLPAASEEAEPAEGLRV. The segment covering 157-180 has biased composition (pro residues); that stretch reads PPPPPPPPAPPRPPPAAPSPPAAP. Residues 197-206 are compositionally biased toward polar residues; that stretch reads LQKTGSNSFT. Position 241 is a phosphoserine (Ser241). Low complexity predominate over residues 267–282; that stretch reads TPSATPASPPASATPS. Residues 283–296 are compositionally biased toward polar residues; it reads QRQCVSAATSTNDS. Residues Ser362, Ser418, and Ser463 each carry the phosphoserine modification. Disordered regions lie at residues 500-535, 572-630, 642-662, and 674-711; these read TFTVVPKRKPGTLQDQHFSQANREPRPREAEEEEAS, SRKK…EKPF, SVRPESSRLPEGSSGLSSYTP, and QALEQAPREAEPPPVEAMLTPASQNDLSDFRSEPALYF. Polar residues-rich tracts occupy residues 512–521 and 581–590; these read LQDQHFSQAN and NDKSLQTTFE. Over residues 597 to 624 the composition is skewed to acidic residues; that stretch reads LEQEEEVDQQEEEEEEEEEEEEEEEGSG.

This sequence belongs to the taperin family. As to quaternary structure, interacts with GRXCR2; the interaction restricts TPRN to the stereocilum basal region. Interacts with actin ACTB; the interaction may stabilize stereocilia. Interacts with CLIC5. Interacts with PTPRQ. TPRN, CLIC5 and PTPQR form concentric rings at the base of stereocilia and may form a complex. Interacts with phosphatase PPP1CA; the interaction results in inhibition of PPC1A phosphatase activity. Interacts with DNA damage response proteins XRCC6/KU70, XRCC5/KU80, PARP1, TOP1 and TOP2A; these interactions recruit TPRN to sites of DNA damage where it may play a role in DNA repair. Expression is detected in fetal cochlea.

It localises to the cell projection. It is found in the stereocilium. Its subcellular location is the microvillus. The protein localises to the nucleus. The protein resides in the nucleoplasm. It localises to the cytoplasm. Functionally, essential for hearing. Required for maintenance of stereocilia on both inner and outer hair cells. Necessary for the integrity of the stereociliary rootlet. May act as an actin cytoskeleton regulator involved in the regulation of actin dynamics at the pointed end in hair cells. Forms rings at the base of stereocilia and binds actin filaments in the stereocilia which may stabilize the stereocilia. Acts as a strong inhibitor of PPP1CA phosphatase activity. Recruited to sites of DNA damage and may play a role in DNA damage repair. This is Taperin (TPRN) from Homo sapiens (Human).